Consider the following 233-residue polypeptide: Low affinity immunoglobulin gamma Fc region receptor III-B (233 aa).

Residues 1–16 (MWQLLLPTALLLLVSA) form the signal peptide. Ig-like C2-type domains lie at 40–96 (KDSV…LSTL) and 121–179 (EDPI…VGSK). A disulfide bridge links Cys-47 with Cys-89. N-linked (GlcNAc...) asparagine glycans are attached at residues Asn-56, Asn-63, Asn-82, and Asn-92. The cysteines at positions 128 and 172 are disulfide-linked. 2 N-linked (GlcNAc...) asparagine glycosylation sites follow: Asn-180 and Asn-187. Ser-200 carries the GPI-anchor amidated serine lipid modification. Residues 201–233 (SFSPPGYQVSFCLVMVLLFAVDTGLYFSVKTNI) constitute a propeptide, removed in mature form.

As to quaternary structure, monomer. Interacts with INPP5D/SHIP1. Glycosylated. Glycosylation plays an inhibitory role in the interaction with IgG3. In terms of processing, the soluble form is produced by a proteolytic cleavage. In terms of tissue distribution, expressed specifically by polymorphonuclear leukocytes (neutrophils). Also expressed by stimulated eosinophils.

It localises to the cell membrane. The protein resides in the secreted. Functionally, receptor for the Fc region of immunoglobulins gamma. Low affinity receptor. Binds complexed or aggregated IgG and also monomeric IgG. Contrary to III-A, is not capable to mediate antibody-dependent cytotoxicity and phagocytosis. May serve as a trap for immune complexes in the peripheral circulation which does not activate neutrophils. In Homo sapiens (Human), this protein is Low affinity immunoglobulin gamma Fc region receptor III-B (FCGR3B).